The chain runs to 341 residues: UPF0283 membrane protein HD_1769 (341 aa).

Transmembrane regions (helical) follow at residues 57 to 77, 86 to 106, and 204 to 224; these read LLAVLVLFGLAVIARSVQCLI, IDLAFAIVFFMVSLAGIGAII, and ENAIIVAVSPLVIVDMLMIAW.

This sequence belongs to the UPF0283 family.

It localises to the cell inner membrane. This is UPF0283 membrane protein HD_1769 from Haemophilus ducreyi (strain 35000HP / ATCC 700724).